An 881-amino-acid chain; its full sequence is Probable alpha/beta-glucosidase agdC (881 aa).

An N-terminal signal peptide occupies residues 1 to 14; the sequence is MLRSLLLLAPLVGA. N-linked (GlcNAc...) asparagine glycosylation is found at asparagine 171, asparagine 293, and asparagine 373. The active-site Nucleophile is the aspartate 422. The active site involves glutamate 425. A disordered region spans residues 440–485; it reads YSRDNDLPPAAPPVRPSNPRPLPGFPGDFQPSSSSKRSTKGSKVGL. The span at 448–463 shows a compositional bias: pro residues; it reads PAAPPVRPSNPRPLPG. N-linked (GlcNAc...) asparagine glycosylation occurs at asparagine 506. Aspartate 571 serves as the catalytic Proton donor. N-linked (GlcNAc...) asparagine glycosylation is found at asparagine 572, asparagine 608, and asparagine 742.

This sequence belongs to the glycosyl hydrolase 31 family.

It localises to the secreted. The enzyme catalyses Hydrolysis of terminal, non-reducing (1-&gt;4)-linked alpha-D-glucose residues with release of alpha-D-glucose.. The catalysed reaction is Hydrolysis of terminal, non-reducing beta-D-glucosyl residues with release of beta-D-glucose.. In terms of biological role, glucosidase involved in the degradation of cellulosic biomass. Has both alpha- and beta-glucosidase activity. This chain is Probable alpha/beta-glucosidase agdC (agdC), found in Neosartorya fischeri (strain ATCC 1020 / DSM 3700 / CBS 544.65 / FGSC A1164 / JCM 1740 / NRRL 181 / WB 181) (Aspergillus fischerianus).